We begin with the raw amino-acid sequence, 319 residues long: Acetyl-coenzyme A carboxylase carboxyl transferase subunit alpha (319 aa).

Residues 35 to 296 enclose the CoA carboxyltransferase C-terminal domain; it reads NIDEEVHRLR…KAQLLADLAD (262 aa).

This sequence belongs to the AccA family. In terms of assembly, acetyl-CoA carboxylase is a heterohexamer composed of biotin carboxyl carrier protein (AccB), biotin carboxylase (AccC) and two subunits each of ACCase subunit alpha (AccA) and ACCase subunit beta (AccD).

The protein resides in the cytoplasm. The enzyme catalyses N(6)-carboxybiotinyl-L-lysyl-[protein] + acetyl-CoA = N(6)-biotinyl-L-lysyl-[protein] + malonyl-CoA. The protein operates within lipid metabolism; malonyl-CoA biosynthesis; malonyl-CoA from acetyl-CoA: step 1/1. Component of the acetyl coenzyme A carboxylase (ACC) complex. First, biotin carboxylase catalyzes the carboxylation of biotin on its carrier protein (BCCP) and then the CO(2) group is transferred by the carboxyltransferase to acetyl-CoA to form malonyl-CoA. The sequence is that of Acetyl-coenzyme A carboxylase carboxyl transferase subunit alpha from Klebsiella pneumoniae subsp. pneumoniae (strain ATCC 700721 / MGH 78578).